Reading from the N-terminus, the 362-residue chain is Glutamine synthetase (362 aa).

One can recognise a GS beta-grasp domain in the interval 26–107 (LIAEYIWIDS…VLSECWNADG (82 aa)). Residues 114-362 (HRHEAAKLME…METCFGAVSE (249 aa)) form the GS catalytic domain.

Belongs to the glutamine synthetase family. As to quaternary structure, homooctamer.

The protein resides in the cytoplasm. The enzyme catalyses L-glutamate + NH4(+) + ATP = L-glutamine + ADP + phosphate + H(+). The polypeptide is Glutamine synthetase (gln-1) (Neurospora crassa (strain ATCC 24698 / 74-OR23-1A / CBS 708.71 / DSM 1257 / FGSC 987)).